The sequence spans 349 residues: Phosphate carrier protein, mitochondrial (349 aa).

3 Solcar repeats span residues 47-131 (KYFA…FKVQ), 144-229 (YRTF…TVEL), and 246-324 (EQLV…VKVW). The next 6 membrane-spanning stretches (helical) occupy residues 48–68 (YFALCGLGGILSCGITHTAVV), 108–128 (APTFIGYSLQGLCKFGLYEVF), 147–167 (FVYLAASASAEFFADIALSPL), 207–227 (PLWGRQIPYTMMKFACFEKTV), 248–268 (LVVTFAAGYIAGVFCAIVSHP), and 304–324 (IIMIGTLTALQWFIYDAVKVW).

It belongs to the mitochondrial carrier (TC 2.A.29) family.

It is found in the mitochondrion inner membrane. Transport of phosphate groups from the cytosol to the mitochondrial matrix. This chain is Phosphate carrier protein, mitochondrial, found in Choristoneura fumiferana (Spruce budworm moth).